A 547-amino-acid polypeptide reads, in one-letter code: Chaperonin GroEL (547 aa).

Residues 30–33 (TLGP), Lys-51, 87–91 (DGTTT), Gly-415, and Asp-495 contribute to the ATP site. The segment at 526–547 (QDATPTASPDMGGMGGMGGGMM) is disordered. The span at 537–547 (GGMGGMGGGMM) shows a compositional bias: gly residues.

The protein belongs to the chaperonin (HSP60) family. As to quaternary structure, forms a cylinder of 14 subunits composed of two heptameric rings stacked back-to-back. Interacts with the co-chaperonin GroES.

The protein localises to the cytoplasm. The enzyme catalyses ATP + H2O + a folded polypeptide = ADP + phosphate + an unfolded polypeptide.. Together with its co-chaperonin GroES, plays an essential role in assisting protein folding. The GroEL-GroES system forms a nano-cage that allows encapsulation of the non-native substrate proteins and provides a physical environment optimized to promote and accelerate protein folding. The chain is Chaperonin GroEL from Vesicomyosocius okutanii subsp. Calyptogena okutanii (strain HA).